Here is a 115-residue protein sequence, read N- to C-terminus: Hydrogenase maturation factor HypA (115 aa).

His-2 is a binding site for Ni(2+). Residues Cys-73, Cys-76, Cys-89, and Cys-92 each contribute to the Zn(2+) site.

Belongs to the HypA/HybF family.

In terms of biological role, involved in the maturation of [NiFe] hydrogenases. Required for nickel insertion into the metal center of the hydrogenase. In Aquifex aeolicus (strain VF5), this protein is Hydrogenase maturation factor HypA.